Consider the following 296-residue polypeptide: Phosphatidylserine decarboxylase proenzyme (296 aa).

Residues Asp-113, His-169, and Ser-256 each act as charge relay system; for autoendoproteolytic cleavage activity in the active site. Catalysis depends on Ser-256, which acts as the Schiff-base intermediate with substrate; via pyruvic acid; for decarboxylase activity. Position 256 is a pyruvic acid (Ser); by autocatalysis (Ser-256).

This sequence belongs to the phosphatidylserine decarboxylase family. PSD-B subfamily. Prokaryotic type II sub-subfamily. Heterodimer of a large membrane-associated beta subunit and a small pyruvoyl-containing alpha subunit. Pyruvate serves as cofactor. In terms of processing, is synthesized initially as an inactive proenzyme. Formation of the active enzyme involves a self-maturation process in which the active site pyruvoyl group is generated from an internal serine residue via an autocatalytic post-translational modification. Two non-identical subunits are generated from the proenzyme in this reaction, and the pyruvate is formed at the N-terminus of the alpha chain, which is derived from the carboxyl end of the proenzyme. The autoendoproteolytic cleavage occurs by a canonical serine protease mechanism, in which the side chain hydroxyl group of the serine supplies its oxygen atom to form the C-terminus of the beta chain, while the remainder of the serine residue undergoes an oxidative deamination to produce ammonia and the pyruvoyl prosthetic group on the alpha chain. During this reaction, the Ser that is part of the protease active site of the proenzyme becomes the pyruvoyl prosthetic group, which constitutes an essential element of the active site of the mature decarboxylase.

Its subcellular location is the cell membrane. It carries out the reaction a 1,2-diacyl-sn-glycero-3-phospho-L-serine + H(+) = a 1,2-diacyl-sn-glycero-3-phosphoethanolamine + CO2. Its pathway is phospholipid metabolism; phosphatidylethanolamine biosynthesis; phosphatidylethanolamine from CDP-diacylglycerol: step 2/2. Functionally, catalyzes the formation of phosphatidylethanolamine (PtdEtn) from phosphatidylserine (PtdSer). The protein is Phosphatidylserine decarboxylase proenzyme of Clostridium beijerinckii (strain ATCC 51743 / NCIMB 8052) (Clostridium acetobutylicum).